A 621-amino-acid polypeptide reads, in one-letter code: 1-deoxy-D-xylulose-5-phosphate synthase (621 aa).

Residues H80 and 121-123 contribute to the thiamine diphosphate site; that span reads GHS. D152 lines the Mg(2+) pocket. Thiamine diphosphate contacts are provided by residues 153 to 154, N181, Y288, and E370; that span reads GA. Mg(2+) is bound at residue N181.

The protein belongs to the transketolase family. DXPS subfamily. Homodimer. Requires Mg(2+) as cofactor. It depends on thiamine diphosphate as a cofactor.

It carries out the reaction D-glyceraldehyde 3-phosphate + pyruvate + H(+) = 1-deoxy-D-xylulose 5-phosphate + CO2. The protein operates within metabolic intermediate biosynthesis; 1-deoxy-D-xylulose 5-phosphate biosynthesis; 1-deoxy-D-xylulose 5-phosphate from D-glyceraldehyde 3-phosphate and pyruvate: step 1/1. Catalyzes the acyloin condensation reaction between C atoms 2 and 3 of pyruvate and glyceraldehyde 3-phosphate to yield 1-deoxy-D-xylulose-5-phosphate (DXP). The sequence is that of 1-deoxy-D-xylulose-5-phosphate synthase from Shewanella sediminis (strain HAW-EB3).